We begin with the raw amino-acid sequence, 148 residues long: Receptor activity-modifying protein 1 (148 aa).

Positions 1 to 26 are cleaved as a signal peptide; that stretch reads MARGLRGLPRRGLWLLLVNHLFLATA. 3 disulfides stabilise this stretch: Cys27/Cys82, Cys40/Cys72, and Cys57/Cys104. At 27–118 the chain is on the extracellular side; it reads CQDTDHAALL…RALQDPPSSV (92 aa). A helical membrane pass occupies residues 119-140; the sequence is LCPFIVVPILATLLMTALVVWR. Over 141 to 148 the chain is Cytoplasmic; sequence SKRPEGIV.

This sequence belongs to the RAMP family. In terms of assembly, heterodimer of CALCRL and RAMP1; the interaction induces allosteric modulation of CALCRL function and CGRP1/CALCA and CGRP2/CALCB ligand specificity. Heterodimer of CALCR and RAMP1; interaction forms the AMYR1 receptor complex for amylin/IAPP and CGRP1/CALCA ligands.

The protein localises to the cell membrane. Functionally, accessory protein that interacts with and modulates the function of G-protein coupled receptors including calcitonin gene-related peptide type 1 receptor (CALCRL) and calcitonin receptor (CALCR). Required for the transport of CALCRL to the plasma membrane. Together with CALCRL, form the receptor complex for the calcitonin gene-related peptides CGRP1/CALCA and CGRP2/CALCB. Together with CALCR, form the AMYR1 receptor complex for amylin/IAPP and CGRP1/CALCA. This is Receptor activity-modifying protein 1 (RAMP1) from Sus scrofa (Pig).